Here is a 442-residue protein sequence, read N- to C-terminus: MRTLFLIDGEHYPPVVLDAMRRVREQLGAKGVAAAFLGGTEKIGEGADYGLPLVAAEDPVSAVRQALERYGVEAVVDLSDEPVVGYRERMRIASLALAAGARYVGSDFELRPPEMRRVPGKPSLAVIGTGKRVGKTAVTGYLARLLDREGFRPAVVSMGRGGPPEPEVLEGRRLEVGSDYLLRALERGAHAASDYYETAALSRVTTVGCRRCGGGLAGEPFVSNVLEGARIAAGLDTGITVFDGSGAAIPPVEVDRRVLVAGAHQDPEYVAGYLGAYRLLISDLLVLTMAEEPMAPPGRVEELVRRVREVRPDLPVIPAVFRPRPVGEVRGMRVAYVSTAPPAVLKRLAGHLEEGYGCEVVAVSGNLSNRSKLAEDLEGMPGVDAYLTEIKAAAVDVVTRRGAEEGRRVIYCDNDPVAEGLDGALLRLARAAGRGRSGDRGV.

Belongs to the cyclic 2,3-diphosphoglycerate synthetase family.

It is found in the cytoplasm. The enzyme catalyses (2R)-2,3-bisphosphoglycerate + ATP + H(+) = cyclic (2R)-2,3-bisphosphoglycerate + ADP + phosphate. In terms of biological role, catalyzes the formation of cyclic 2,3-diphosphoglycerate (cDPG) by formation of an intramolecular phosphoanhydride bond at the expense of ATP. The protein is Cyclic 2,3-diphosphoglycerate synthetase of Rubrobacter xylanophilus (strain DSM 9941 / JCM 11954 / NBRC 16129 / PRD-1).